The following is a 292-amino-acid chain: Medium chain reductase/dehydrogenase ucsI (292 aa).

Position 43 (Cys-43) interacts with Zn(2+). Residue Tyr-49 coordinates substrate. Positions 65 and 66 each coordinate Zn(2+). Residues Gly-184–Gly-189, Asp-208, Arg-213, and Ile-276–Ala-278 each bind NAD(+).

It belongs to the zinc-containing alcohol dehydrogenase family. The cofactor is Zn(2+).

The protein operates within mycotoxin biosynthesis. In terms of biological role, medium chain reductase/dehydrogenase; part of the gene cluster that mediates the biosynthesis of UCS1025A, a member of the pyrrolizidinone family that acts as a strong telomerase inhibitor and displays potent antibacterial and antitumor properties. These compounds share a hemiaminal-containing pyrrolizidinone core fused with a gamma-lactone, giving a furopyrrolizidine that is connected to a decalin fragment. The polyketide synthase module (PKS) of the PKS-NRPS ucsA is responsible for the synthesis of the polyketide backbone via the condensation of an acetyl-CoA starter unit with 6 malonyl-CoA units. The downstream nonribosomal peptide synthetase (NRPS) module then amidates the carboxyl end of the polyketide with a 2S,3S-methylproline derived from L-isoleucine by the 2-oxoglutarate-dependent dioxygenase ucsF which converts L-isoleucine to (4S,5S)-4-methylpyrroline-5-carboxylate that is further converted to 2S,3S-methylproline by the pyrroline-5-carboxylate reductase ucsG. Reductive release of the completed aminoacyl polyketide from the assembly line can form the 3-pyrrolin-2-one structure via an intramolecular Knoevenagel reaction. Because ucsA lacks a designated enoylreductase (ER) domain, the required activity is provided the enoyl reductase ucsL. This keto acyclic precursor is the substrate of the Diels-Alderase ucsH, that catalyzes the Diels-Alder cycloaddition. Oxidation of the 3S-methyl group to a carboxylate by the cytochrome P450 monooxygenase ucsK allows an oxa-Michael cyclization that might involve the reductase/dehydrogenase ucsI and which furnishes the furopyrrolizidine. The oxidase ucsJ likely plays a critical role in stereoselective reduction of the C5-C6 double bond to afford the required R-configured carboxylate group. Further enolization and oxidation at C5 by an unidentified enzyme affords the last intermediate that can undergo oxa-Michael cyclization to yield UCS1025A. This is Medium chain reductase/dehydrogenase ucsI from Acremonium sp.